Reading from the N-terminus, the 57-residue chain is UPF0391 membrane protein HNE_2348 (57 aa).

A run of 2 helical transmembrane segments spans residues tryptophan 4–alanine 24 and alanine 27–valine 47.

This sequence belongs to the UPF0391 family.

It localises to the cell membrane. The polypeptide is UPF0391 membrane protein HNE_2348 (Hyphomonas neptunium (strain ATCC 15444)).